Consider the following 150-residue polypeptide: Ribosomal RNA large subunit methyltransferase H (150 aa).

S-adenosyl-L-methionine-binding positions include Ala100 and 118–123; that span reads LSEMTF.

Belongs to the RNA methyltransferase RlmH family. As to quaternary structure, homodimer.

It localises to the cytoplasm. It carries out the reaction pseudouridine(1915) in 23S rRNA + S-adenosyl-L-methionine = N(3)-methylpseudouridine(1915) in 23S rRNA + S-adenosyl-L-homocysteine + H(+). Specifically methylates the pseudouridine at position 1915 (m3Psi1915) in 23S rRNA. The protein is Ribosomal RNA large subunit methyltransferase H of Helicobacter pylori (strain J99 / ATCC 700824) (Campylobacter pylori J99).